A 348-amino-acid polypeptide reads, in one-letter code: Phospho-N-acetylmuramoyl-pentapeptide-transferase (348 aa).

10 helical membrane-spanning segments follow: residues 11–31, 67–87, 92–112, 128–148, 163–183, 198–218, 222–242, 251–271, 276–296, and 326–346; these read SLIL…IFLG, TAGG…LLPL, TWLF…DDIV, FIVQ…IDKE, IFLG…MLAI, GLAT…AIMS, PLAY…LAFL, VFMG…CAVM, LFLI…ILQV, and VVAR…VAAL.

Belongs to the glycosyltransferase 4 family. MraY subfamily. The cofactor is Mg(2+).

It localises to the cell inner membrane. It carries out the reaction UDP-N-acetyl-alpha-D-muramoyl-L-alanyl-gamma-D-glutamyl-meso-2,6-diaminopimeloyl-D-alanyl-D-alanine + di-trans,octa-cis-undecaprenyl phosphate = di-trans,octa-cis-undecaprenyl diphospho-N-acetyl-alpha-D-muramoyl-L-alanyl-D-glutamyl-meso-2,6-diaminopimeloyl-D-alanyl-D-alanine + UMP. The protein operates within cell wall biogenesis; peptidoglycan biosynthesis. Catalyzes the initial step of the lipid cycle reactions in the biosynthesis of the cell wall peptidoglycan: transfers peptidoglycan precursor phospho-MurNAc-pentapeptide from UDP-MurNAc-pentapeptide onto the lipid carrier undecaprenyl phosphate, yielding undecaprenyl-pyrophosphoryl-MurNAc-pentapeptide, known as lipid I. This Chlamydia felis (strain Fe/C-56) (Chlamydophila felis) protein is Phospho-N-acetylmuramoyl-pentapeptide-transferase.